We begin with the raw amino-acid sequence, 68 residues long: MRTSYLLLFTLCLLMSEMASGDNFLTGLGHRSDHYNCVRSGGQCLYSACPIYTKIQGTCYHGKAKCCK.

The first 21 residues, 1–21 (MRTSYLLLFTLCLLMSEMASG), serve as a signal peptide directing secretion. Positions 22–32 (DNFLTGLGHRS) are excised as a propeptide. 3 disulfides stabilise this stretch: cysteine 37–cysteine 66, cysteine 44–cysteine 59, and cysteine 49–cysteine 67.

Belongs to the beta-defensin family. In terms of assembly, monomer. Homodimer.

The protein localises to the secreted. It is found in the membrane. Has bactericidal activity. May act as a ligand for C-C chemokine receptor CCR6. Positively regulates the sperm motility and bactericidal activity in a CCR6-dependent manner. Binds to CCR6 and triggers Ca2+ mobilization in the sperm which is important for its motility. This chain is Beta-defensin 1 (DEFB1), found in Presbytis melalophos (Mitred leaf monkey).